A 406-amino-acid polypeptide reads, in one-letter code: Acetate kinase (406 aa).

Asn-7 contacts Mg(2+). Lys-14 serves as a coordination point for ATP. Arg-90 is a binding site for substrate. Catalysis depends on Asp-147, which acts as the Proton donor/acceptor. ATP contacts are provided by residues 207-211 (HLGNG), 283-285 (DMR), and 331-335 (GVGEN). Mg(2+) is bound at residue Glu-385.

It belongs to the acetokinase family. As to quaternary structure, homodimer. It depends on Mg(2+) as a cofactor. Mn(2+) is required as a cofactor.

Its subcellular location is the cytoplasm. It carries out the reaction acetate + ATP = acetyl phosphate + ADP. The protein operates within metabolic intermediate biosynthesis; acetyl-CoA biosynthesis; acetyl-CoA from acetate: step 1/2. Functionally, catalyzes the formation of acetyl phosphate from acetate and ATP. Can also catalyze the reverse reaction. The protein is Acetate kinase of Thermosipho africanus (strain TCF52B).